The following is a 717-amino-acid chain: Choline transporter-like protein 5 (717 aa).

Positions 1 to 24 are disordered; it reads MNDTEKPADTASEEEDFGDPRTYD. The Cytoplasmic segment spans residues 1–38; sequence MNDTEKPADTASEEEDFGDPRTYDPDFKGPVSNRSCTD. The helical transmembrane segment at 39–59 threads the bilayer; that stretch reads VLCCMIFLLCIVGYIVLGLVA. Topologically, residues 60–242 are extracellular; that stretch reads WVHGDPRRAA…KVFEDYATTW (183 aa). N-linked (GlcNAc...) asparagine glycosylation is found at asparagine 88 and asparagine 190. A helical membrane pass occupies residues 243 to 263; that stretch reads YWILIGLMIAMVLSWIFLILL. Over 264-265 the chain is Cytoplasmic; sequence RF. The chain crosses the membrane as a helical span at residues 266–286; the sequence is IAGCLFWVFMIGVIGIIGYGI. Residues 287 to 325 are Extracellular-facing; sequence WHCYQQYTNLQEHPRSVLTVYDIGIQTNISMYFELQQTW. A glycan (N-linked (GlcNAc...) asparagine) is linked at asparagine 314. The chain crosses the membrane as a helical span at residues 326-346; it reads FTLMIILCIIEVIVILMLIFL. At 347–351 the chain is on the cytoplasmic side; that stretch reads RNRIR. Residues 352–372 form a helical membrane-spanning segment; that stretch reads VAIILLKEGSKAIGYVPSTLV. The Extracellular portion of the chain corresponds to 373 to 374; the sequence is YP. Residues 375–395 form a helical membrane-spanning segment; it reads ALTFILLSICICYWVVTAVFL. At 396 to 460 the chain is on the cytoplasmic side; the sequence is ATSGVPVYKV…QYIPTFHVYN (65 aa). Residues 461-481 form a helical membrane-spanning segment; it reads LFVFLWLINFVIALGQCALAG. At 482–515 the chain is on the extracellular side; that stretch reads AFATYYWAMKKPDDIPRYPLFTAFGRAIRYHTGS. The helical transmembrane segment at 516 to 536 threads the bilayer; sequence LAFGSLIIALIQMFKIVLEYL. Over 537-610 the chain is Cytoplasmic; the sequence is NHRLKRTENT…KVAVTDEVTY (74 aa). Residues 611–631 traverse the membrane as a helical segment; the sequence is FVLFLGKILVAGSIGVLAFLF. Residues 632–649 lie on the Extracellular side of the membrane; the sequence is FTQRLPVIAQGPASLNYY. A helical membrane pass occupies residues 650 to 670; that stretch reads WVPLLTVILGSYLIAHGFFSV. The Cytoplasmic segment spans residues 671–717; sequence YAMCVETIFICFLEDLERNDGSTARPYYVSQPLLKIFQEENLQTKQQ.

It belongs to the CTL (choline transporter-like) family.

It localises to the cell membrane. It carries out the reaction choline(out) + n H(+)(in) = choline(in) + n H(+)(out). In terms of biological role, choline/H+ antiporter. The sequence is that of Choline transporter-like protein 5 (SLC44A5) from Macaca fascicularis (Crab-eating macaque).